The chain runs to 218 residues: Ribose-5-phosphate isomerase A (218 aa).

Residues 28 to 31, 81 to 84, and 94 to 97 contribute to the substrate site; these read TGST, DGAD, and KGGG. Residue Glu-103 is the Proton acceptor of the active site. Lys-121 serves as a coordination point for substrate.

It belongs to the ribose 5-phosphate isomerase family. Homodimer.

It carries out the reaction aldehydo-D-ribose 5-phosphate = D-ribulose 5-phosphate. Its pathway is carbohydrate degradation; pentose phosphate pathway; D-ribose 5-phosphate from D-ribulose 5-phosphate (non-oxidative stage): step 1/1. Catalyzes the reversible conversion of ribose-5-phosphate to ribulose 5-phosphate. This chain is Ribose-5-phosphate isomerase A, found in Shewanella woodyi (strain ATCC 51908 / MS32).